Consider the following 96-residue polypeptide: Co-chaperonin GroES (96 aa).

It belongs to the GroES chaperonin family. As to quaternary structure, heptamer of 7 subunits arranged in a ring. Interacts with the chaperonin GroEL.

The protein localises to the cytoplasm. Together with the chaperonin GroEL, plays an essential role in assisting protein folding. The GroEL-GroES system forms a nano-cage that allows encapsulation of the non-native substrate proteins and provides a physical environment optimized to promote and accelerate protein folding. GroES binds to the apical surface of the GroEL ring, thereby capping the opening of the GroEL channel. This chain is Co-chaperonin GroES, found in Aromatoleum aromaticum (strain DSM 19018 / LMG 30748 / EbN1) (Azoarcus sp. (strain EbN1)).